A 444-amino-acid polypeptide reads, in one-letter code: Deoxyguanosinetriphosphate triphosphohydrolase-like protein (444 aa).

The HD domain occupies 59–250 (RLTHSLEVSQ…MELADDIAYA (192 aa)).

Belongs to the dGTPase family. Type 2 subfamily.

The sequence is that of Deoxyguanosinetriphosphate triphosphohydrolase-like protein from Shewanella halifaxensis (strain HAW-EB4).